We begin with the raw amino-acid sequence, 742 residues long: Photosystem I P700 chlorophyll a apoprotein A2 2 (742 aa).

A run of 8 helical transmembrane segments spans residues 46 to 69 (IFAT…FHVA), 135 to 158 (LYQG…LHLQ), 175 to 199 (LNHH…HVAI), 273 to 291 (MAHH…GHMY), 334 to 357 (LHFQ…QHMY), 373 to 399 (AALY…IFWV), 421 to 443 (AIIS…LYVH), and 524 to 542 (FLVH…LICV). [4Fe-4S] cluster-binding residues include Cys-566 and Cys-575. The next 2 membrane-spanning stretches (helical) occupy residues 583-604 (SFYL…YWHW) and 651-673 (LSVW…MFLI). Residues His-662, Met-670, and Tyr-678 each contribute to the chlorophyll a site. Trp-679 serves as a coordination point for phylloquinone. A helical membrane pass occupies residues 715 to 735 (LVGLAHFTVGYILTYAAFLIA).

The protein belongs to the PsaA/PsaB family. In terms of assembly, the PsaA/B heterodimer binds the P700 chlorophyll special pair and subsequent electron acceptors. PSI consists of a core antenna complex that captures photons, and an electron transfer chain that converts photonic excitation into a charge separation. The cyanobacterial PSI reaction center is composed of one copy each of PsaA,B,C,D,E,F,I,J,K,L,M and X, and forms trimeric complexes. It depends on PSI electron transfer chain: 5 chlorophyll a, 1 chlorophyll a', 2 phylloquinones and 3 4Fe-4S clusters. PSI core antenna: 90 chlorophyll a, 22 carotenoids, 3 phospholipids and 1 galactolipid. P700 is a chlorophyll a/chlorophyll a' dimer, A0 is one or more chlorophyll a, A1 is one or both phylloquinones and FX is a shared 4Fe-4S iron-sulfur center. as a cofactor.

The protein resides in the cellular thylakoid membrane. It catalyses the reaction reduced [plastocyanin] + hnu + oxidized [2Fe-2S]-[ferredoxin] = oxidized [plastocyanin] + reduced [2Fe-2S]-[ferredoxin]. Functionally, psaA and PsaB bind P700, the primary electron donor of photosystem I (PSI), as well as the electron acceptors A0, A1 and FX. PSI is a plastocyanin/cytochrome c6-ferredoxin oxidoreductase, converting photonic excitation into a charge separation, which transfers an electron from the donor P700 chlorophyll pair to the spectroscopically characterized acceptors A0, A1, FX, FA and FB in turn. Oxidized P700 is reduced on the lumenal side of the thylakoid membrane by plastocyanin or cytochrome c6. In Trichormus variabilis (strain ATCC 29413 / PCC 7937) (Anabaena variabilis), this protein is Photosystem I P700 chlorophyll a apoprotein A2 2.